We begin with the raw amino-acid sequence, 1496 residues long: Carbamoyl-phosphate synthase [ammonia], mitochondrial (1496 aa).

The transit peptide at 1-33 (MTRILSVFKTAKTGVLNAAAHRYRGFSKAGVRL) directs the protein to the mitochondrion. Positions 34–214 (MSVKAQTANL…TKVFGKGNPV (181 aa)) are anthranilate phosphoribosyltransferase homolog. The region spanning 215–401 (RIVAVDCGVK…MSLIKKGKGT (187 aa)) is the Glutamine amidotransferase type-1 domain. Catalysis depends on C290, which acts as the For GATase activity. 2 consecutive ATP-grasp domains span residues 548–740 (SDKL…KIAL) and 1090–1281 (SAVL…KVMI). An MGS-like domain is found at 1352–1496 (FKLPQKGILI…YRQFGGAKPS (145 aa)). N-acetyl-L-glutamate contacts are provided by T1388, T1391, W1407, N1433, N1436, and N1445.

It localises to the mitochondrion. The enzyme catalyses hydrogencarbonate + NH4(+) + 2 ATP = carbamoyl phosphate + 2 ADP + phosphate + 2 H(+). Requires N-acetyl-L-glutamate (NAG) as an allosteric activator. In terms of biological role, involved in the urea cycle of ureotelic animals where the enzyme plays an important role in removing excess ammonia from the cell. This is Carbamoyl-phosphate synthase [ammonia], mitochondrial from Aquarana catesbeiana (American bullfrog).